A 141-amino-acid chain; its full sequence is Nucleoside diphosphate kinase (141 aa).

The ATP site is built by K11, F59, R87, T93, R104, and N114. The active-site Pros-phosphohistidine intermediate is the H117.

Belongs to the NDK family. As to quaternary structure, homotetramer. Requires Mg(2+) as cofactor.

The protein resides in the cytoplasm. It catalyses the reaction a 2'-deoxyribonucleoside 5'-diphosphate + ATP = a 2'-deoxyribonucleoside 5'-triphosphate + ADP. The enzyme catalyses a ribonucleoside 5'-diphosphate + ATP = a ribonucleoside 5'-triphosphate + ADP. Functionally, major role in the synthesis of nucleoside triphosphates other than ATP. The ATP gamma phosphate is transferred to the NDP beta phosphate via a ping-pong mechanism, using a phosphorylated active-site intermediate. The sequence is that of Nucleoside diphosphate kinase from Acidovorax ebreus (strain TPSY) (Diaphorobacter sp. (strain TPSY)).